The sequence spans 580 residues: TRAF-type zinc finger domain-containing protein 1 (580 aa).

A2 carries the post-translational modification N-acetylalanine. A TRAF-type zinc finger spans residues 27–103; sequence IHEIHCQRNI…DLELSVVKLK (77 aa). Phosphoserine is present on residues S278, S320, S326, S327, S409, S415, S430, S450, S469, and S532. 3 disordered regions span residues 395-453, 468-509, and 524-580; these read TANH…SPNR, PSGP…ASGH, and FAPS…EEEE. Residues 407–417 show a composition bias toward polar residues; sequence QDSQPENTSAE.

As to quaternary structure, interacts with MAVS, TICAM1, TRAF1, TRAF2, TRAF3 and TRAF6. As to expression, expressed in skeletal muscle, brain, liver, kidney, spleen and bone marrow. Expression depends on STAT1.

Functionally, negative feedback regulator that controls excessive innate immune responses. Regulates both Toll-like receptor 4 (TLR4) and DDX58/RIG1-like helicases (RLH) pathways. May inhibit the LTR pathway by direct interaction with TRAF6 and attenuation of NF-kappa-B activation. May negatively regulate the RLH pathway downstream from MAVS and upstream of NF-kappa-B and IRF3. The polypeptide is TRAF-type zinc finger domain-containing protein 1 (Trafd1) (Mus musculus (Mouse)).